Here is a 148-residue protein sequence, read N- to C-terminus: Large ribosomal subunit protein uL15 (148 aa).

The segment at 1–51 (MNLSSLKPAEGAVKSRKRIGRGPGSGLGGTSTRGHKGAKSRSGYSKKIGFE) is disordered. Gly residues predominate over residues 21-31 (RGPGSGLGGTS).

This sequence belongs to the universal ribosomal protein uL15 family. In terms of assembly, part of the 50S ribosomal subunit.

Functionally, binds to the 23S rRNA. The chain is Large ribosomal subunit protein uL15 from Porphyromonas gingivalis (strain ATCC BAA-308 / W83).